Reading from the N-terminus, the 260-residue chain is Snake venom serine protease Dav-X (260 aa).

The N-terminal stretch at 1–18 (MVLIRVLANLLILQLSYA) is a signal peptide. The propeptide occupies 19-24 (QKSSEL). The Peptidase S1 domain occupies 25-251 (VIGGVECDIN…YTDWIQNIIA (227 aa)). Intrachain disulfides connect Cys-31–Cys-165, Cys-52–Cys-68, Cys-102–Cys-258, Cys-144–Cys-212, Cys-176–Cys-191, and Cys-202–Cys-227. The Charge relay system role is filled by His-67. N-linked (GlcNAc...) asparagine glycosylation is present at Asn-81. Catalysis depends on Asp-112, which acts as the Charge relay system. N-linked (GlcNAc...) asparagine glycosylation is found at Asn-124 and Asn-172. Ser-206 (charge relay system) is an active-site residue. The N-linked (GlcNAc...) asparagine glycan is linked to Asn-241.

It belongs to the peptidase S1 family. Snake venom subfamily. As to quaternary structure, monomer. As to expression, expressed by the venom gland.

The protein resides in the secreted. Snake venom serine protease that may act in the hemostasis system of the prey. This chain is Snake venom serine protease Dav-X, found in Deinagkistrodon acutus (Hundred-pace snake).